The following is a 371-amino-acid chain: MPHHTLLLFNLLPVSLNISTWWNFGSMLLACLTLQITTGFFLALHYTANVNLAFSSIIHITRDVPYGWTMQNLHSIGASMFFICIYIHIARGLYYSSYLNKEVWLSGITLLATLMATAFFGYVLPWGQMSFWAATVITNLLTAIPYLGTSLTTWLWGGFSINDPTLTRFFALHFILPFAIVSLTSVHIVLLHNEGSSNPLGTNSDIDKIPFHPYHSYKDTLMLTFMITTLFMIMSFAPDLFNDPENFSKANPLITPQHIKPEWYFLFAYGILRSIPNKLGGTLALVMSIAILMTMPFTHTSLVRTMTFRPLSQLMFWTLIATFITITWTATKPVEPPFITIGQLTSILYFSFFMTNPLLGWTENKMMMTNT.

Transmembrane regions (helical) follow at residues 24-44 (FGSM…FLAL), 68-89 (WTMQ…YIHI), 104-124 (WLSG…GYVL), and 169-189 (FFAL…VHIV). Heme b contacts are provided by H74 and H88. Heme b is bound by residues H173 and H187. H192 is a binding site for a ubiquinone. The next 4 membrane-spanning stretches (helical) occupy residues 217-237 (YKDT…MSFA), 279-299 (LGGT…PFTH), 311-331 (LSQL…WTAT), and 338-357 (FITI…MTNP).

It belongs to the cytochrome b family. The cytochrome bc1 complex contains 3 respiratory subunits (MT-CYB, CYC1 and UQCRFS1), 2 core proteins (UQCRC1 and UQCRC2) and probably 6 low-molecular weight proteins. Heme b serves as cofactor.

The protein resides in the mitochondrion inner membrane. Functionally, component of the ubiquinol-cytochrome c reductase complex (complex III or cytochrome b-c1 complex) that is part of the mitochondrial respiratory chain. The b-c1 complex mediates electron transfer from ubiquinol to cytochrome c. Contributes to the generation of a proton gradient across the mitochondrial membrane that is then used for ATP synthesis. In Homoroselaps lacteus (Spotted harlequin snake), this protein is Cytochrome b (MT-CYB).